Reading from the N-terminus, the 339-residue chain is Phenylalanine--tRNA ligase alpha subunit (339 aa).

Glutamate 254 provides a ligand contact to Mg(2+).

The protein belongs to the class-II aminoacyl-tRNA synthetase family. Phe-tRNA synthetase alpha subunit type 1 subfamily. In terms of assembly, tetramer of two alpha and two beta subunits. The cofactor is Mg(2+).

The protein localises to the cytoplasm. The enzyme catalyses tRNA(Phe) + L-phenylalanine + ATP = L-phenylalanyl-tRNA(Phe) + AMP + diphosphate + H(+). The chain is Phenylalanine--tRNA ligase alpha subunit from Clostridium botulinum (strain 657 / Type Ba4).